A 278-amino-acid chain; its full sequence is Orotidine 5'-phosphate decarboxylase (278 aa).

Lys-95 (proton donor) is an active-site residue.

This sequence belongs to the OMP decarboxylase family. Type 2 subfamily.

It carries out the reaction orotidine 5'-phosphate + H(+) = UMP + CO2. The protein operates within pyrimidine metabolism; UMP biosynthesis via de novo pathway; UMP from orotate: step 2/2. The chain is Orotidine 5'-phosphate decarboxylase from Corynebacterium glutamicum (strain ATCC 13032 / DSM 20300 / JCM 1318 / BCRC 11384 / CCUG 27702 / LMG 3730 / NBRC 12168 / NCIMB 10025 / NRRL B-2784 / 534).